A 591-amino-acid chain; its full sequence is Aspartate--tRNA(Asp/Asn) ligase (591 aa).

Glu174 provides a ligand contact to L-aspartate. The aspartate stretch occupies residues 198 to 201 (QLFK). Residue Arg220 coordinates L-aspartate. ATP is bound by residues 220-222 (RDE) and Gln229. His450 is a binding site for L-aspartate. Glu483 contributes to the ATP binding site. An L-aspartate-binding site is contributed by Arg490. 535 to 538 (GLDR) lines the ATP pocket.

It belongs to the class-II aminoacyl-tRNA synthetase family. Type 1 subfamily. Homodimer.

Its subcellular location is the cytoplasm. The enzyme catalyses tRNA(Asx) + L-aspartate + ATP = L-aspartyl-tRNA(Asx) + AMP + diphosphate. Functionally, aspartyl-tRNA synthetase with relaxed tRNA specificity since it is able to aspartylate not only its cognate tRNA(Asp) but also tRNA(Asn). Reaction proceeds in two steps: L-aspartate is first activated by ATP to form Asp-AMP and then transferred to the acceptor end of tRNA(Asp/Asn). This chain is Aspartate--tRNA(Asp/Asn) ligase, found in Pseudomonas putida (strain W619).